The primary structure comprises 223 residues: Ribose-5-phosphate isomerase A (223 aa).

Residues 32–35, 85–88, and 98–101 each bind substrate; these read TGST, DGAD, and KGGG. The Proton acceptor role is filled by E107. K125 provides a ligand contact to substrate.

It belongs to the ribose 5-phosphate isomerase family. As to quaternary structure, homodimer.

The catalysed reaction is aldehydo-D-ribose 5-phosphate = D-ribulose 5-phosphate. It functions in the pathway carbohydrate degradation; pentose phosphate pathway; D-ribose 5-phosphate from D-ribulose 5-phosphate (non-oxidative stage): step 1/1. Its function is as follows. Catalyzes the reversible conversion of ribose-5-phosphate to ribulose 5-phosphate. This chain is Ribose-5-phosphate isomerase A, found in Pseudomonas syringae pv. tomato (strain ATCC BAA-871 / DC3000).